We begin with the raw amino-acid sequence, 126 residues long: Protein ApaG (126 aa).

In terms of domain architecture, ApaG spans 2-126 (SDPRYQVDVS…FRLAVPGALH (125 aa)).

The protein is Protein ApaG of Pseudomonas fluorescens (strain Pf0-1).